The sequence spans 278 residues: 4-deoxy-L-threo-5-hexosulose-uronate ketol-isomerase (278 aa).

The Zn(2+) site is built by His196, His198, Glu203, and His245.

The protein belongs to the KduI family. It depends on Zn(2+) as a cofactor.

It catalyses the reaction 5-dehydro-4-deoxy-D-glucuronate = 3-deoxy-D-glycero-2,5-hexodiulosonate. The protein operates within glycan metabolism; pectin degradation; 2-dehydro-3-deoxy-D-gluconate from pectin: step 4/5. Catalyzes the isomerization of 5-dehydro-4-deoxy-D-glucuronate to 3-deoxy-D-glycero-2,5-hexodiulosonate. This chain is 4-deoxy-L-threo-5-hexosulose-uronate ketol-isomerase, found in Salmonella typhimurium (strain LT2 / SGSC1412 / ATCC 700720).